The chain runs to 182 residues: MKFLFDLFPIILFFIAYKFGGIYQATIVAMVATIVQILWVYYRHRKIDAMQWVSLIMIMVFGSLTIFLHDSTFILLKPTALYWLFSGVLFVSAQFFNKNWIQVLMGKQITLKPTHAHTVWHQLNLAWSAFFFFMGFLNLYIAFEYSEETWVNFKLFGSTGLLIAFVIAQGFWMSRHIEHPAE.

Helical transmembrane passes span 20-42 (GGIY…WVYY), 55-75 (LIMI…TFIL), 76-96 (LKPT…AQFF), 123-143 (LNLA…YIAF), and 153-173 (FKLF…GFWM).

This sequence belongs to the YciB family.

The protein resides in the cell inner membrane. Plays a role in cell envelope biogenesis, maintenance of cell envelope integrity and membrane homeostasis. In Polynucleobacter asymbioticus (strain DSM 18221 / CIP 109841 / QLW-P1DMWA-1) (Polynucleobacter necessarius subsp. asymbioticus), this protein is Inner membrane-spanning protein YciB.